We begin with the raw amino-acid sequence, 504 residues long: MTLYLDGETLTIEDIKSFLQQQSKIEIIDDALERVKKSRAVVERIIENEETVYGITTGFGLFSDVRIDPTQYNELQVNLIRSHACGLGEPFSKEVALVMMILRLNTLLKGHSGATLELVRQLQFFINERIIPIIPQQGSLGASGDLAPLSHLALALIGEGKVLYRGEEKDSDDVLRELNRQPLNLQAKEGLALINGTQAMTAQGVISYIEAEDLGYQSEWIAALTHQSLNGIIDAYRHDVHAVRNFQEQINVAARMRDWLEGSTLTTRQSEIRVQDAYTLRCIPQIHGASFQVFNYVKQQLEFEMNAANDNPLIFEEANETFVISGGNFHGQPIAFALDHLKLGVSELANVSERRLERLVNPQLNGDLPAFLSPEPGLQSGAMIMQYAAASLVSENKTLAHPASVDSITSSANQEDHVSMGTTAARHGYQIIENARRVLAIECVIALQAAELKGVEGLSPKTRRKYDEFRSIVPSITHDRQFHKDIEAVAQYLKQSIYQTTACH.

A cross-link (5-imidazolinone (Ala-Gly)) is located at residues 142-144 (ASG). Ser-143 is subject to 2,3-didehydroalanine (Ser).

It belongs to the PAL/histidase family. Post-translationally, contains an active site 4-methylidene-imidazol-5-one (MIO), which is formed autocatalytically by cyclization and dehydration of residues Ala-Ser-Gly.

It is found in the cytoplasm. It carries out the reaction L-histidine = trans-urocanate + NH4(+). Its pathway is amino-acid degradation; L-histidine degradation into L-glutamate; N-formimidoyl-L-glutamate from L-histidine: step 1/3. This is Histidine ammonia-lyase from Staphylococcus aureus (strain USA300).